Reading from the N-terminus, the 565-residue chain is Periplasmic trehalase (565 aa).

An N-terminal signal peptide occupies residues 1–30 (MKSPAPSRPQKMALIPACIFLCFAALSVQA). Substrate is bound by residues arginine 152, 159–160 (WD), asparagine 196, 205–207 (RSQ), 277–279 (RPE), and glycine 310. Residues aspartate 312 and glutamate 496 each act as proton donor/acceptor in the active site. A substrate-binding site is contributed by glutamate 511. Residues 539 to 565 (CDNVPATRPLSESTTQPLKQKEAEPTP) form a disordered region.

Belongs to the glycosyl hydrolase 37 family. As to quaternary structure, monomer.

The protein localises to the periplasm. It catalyses the reaction alpha,alpha-trehalose + H2O = alpha-D-glucose + beta-D-glucose. In terms of biological role, provides the cells with the ability to utilize trehalose at high osmolarity by splitting it into glucose molecules that can subsequently be taken up by the phosphotransferase-mediated uptake system. The sequence is that of Periplasmic trehalase from Escherichia coli O1:K1 / APEC.